Reading from the N-terminus, the 1013-residue chain is Adhesion G-protein coupled receptor G2 (1013 aa).

The first 37 residues, 1 to 37 (MLFSGGQYSPVGRPEEVLLIYKIFLVIICFHAILVTS), serve as a signal peptide directing secretion. Residues 38–623 (LKENAGNSSL…TSLPPSQMMA (586 aa)) lie on the Extracellular side of the membrane. 18 N-linked (GlcNAc...) asparagine glycosylation sites follow: Asn44, Asn78, Asn92, Asn104, Asn128, Asn137, Asn155, Asn179, Asn187, Asn366, Asn431, Asn452, Asn457, Asn524, Asn538, Asn543, Asn547, and Asn593. Positions 457–615 (NTTTFAAQDP…GILLDLSRTS (159 aa)) constitute a GAIN-B domain. Intrachain disulfides connect Cys566/Cys597 and Cys585/Cys599. The segment at 566 to 615 (CVFWDLNRNGGRGGWSSDGCSVKEKRMNETICTCSHLTSFGILLDLSRTS) is GPS. The interval 604 to 615 (SFGILLDLSRTS) is stachel. The chain crosses the membrane as a helical span at residues 624 to 644 (LTFITYIGCGLSSIFLSVTLV). Topologically, residues 645-663 (TYIAFEKIRRDYPSKILIQ) are cytoplasmic. A helical transmembrane segment spans residues 664 to 684 (LCAALLLLNLVFLLDSWIALY). Over 685-688 (NARG) the chain is Extracellular. A helical membrane pass occupies residues 689–709 (FCISVAVFLHYFLLVSFTWMG). Cysteines 690 and 774 form a disulfide. Topologically, residues 710 to 733 (LEAFHMYLALVKVFNTYIRKYILK) are cytoplasmic. Residues 734-754 (FCIVGWGIPAVVVSIVLTISP) form a helical membrane-spanning segment. At 755-785 (DNYGIGSYGKFPNGTPDDFCWINSSVVFYIT) the chain is on the extracellular side. Asn777 carries an N-linked (GlcNAc...) asparagine glycan. Residues 786–806 (VVGYFCVIFLLNVSMFIVVLV) traverse the membrane as a helical segment. Residues 807–830 (QLCRIKKKKQLGAQRKTSIQDLRS) are Cytoplasmic-facing. Residues 831–851 (IAGLTFLLGITWGFAFFAWGP) traverse the membrane as a helical segment. The Extracellular segment spans residues 852-853 (VN). Asn853 carries N-linked (GlcNAc...) asparagine glycosylation. The chain crosses the membrane as a helical span at residues 854 to 874 (LTFMYLFAIFNTLQGFFIFIF). Asn864 contacts 3beta-hydroxyandrost-5-en-17-one. The Cytoplasmic portion of the chain corresponds to 875-1013 (YCAAKENVRK…RGSLHFIEQM (139 aa)). The residue at position 1006 (Ser1006) is a Phosphoserine.

It belongs to the G-protein coupled receptor 2 family. Adhesion G-protein coupled receptor (ADGR) subfamily. In terms of assembly, heterodimer of 2 chains generated by proteolytic processing; the large extracellular N-terminal fragment and the membrane-bound C-terminal fragment predominantly remain associated and non-covalently linked. Interacts with CFTR. Post-translationally, proteolytically cleaved into 2 subunits, an extracellular subunit and a seven-transmembrane subunit. Highly glycosylated. Epididymis-specific expression (at protein level). Associated with apical membranes of efferent ductule and proximal epididymal duct epithelia.

It is found in the apical cell membrane. Its activity is regulated as follows. Forms a heterodimer of 2 chains generated by proteolytic processing that remain associated through non-covalent interactions mediated by the GAIN-B domain. In the inactivated receptor, the Stachel sequence (also named stalk) is embedded in the GAIN-B domain, where it adopts a beta-strand conformation. On activation, the Stachel moves into the 7 transmembrane region and adopts a twisted hook-shaped configuration that forms contacts within the receptor, leading to coupling of a G-alpha protein, which activates signaling. The cleaved GAIN-B and N-terminal domains can then dissociate from the rest of the receptor. Deoxycorticosterone (DOC) acts as an antagonist of ADGRG2. In terms of biological role, adhesion G-protein coupled receptor (aGPCR) for steroid hormones, such as dehydroepiandrosterone (DHEA; also named 3beta-hydroxyandrost-5-en-17-one) and androstenedione. Involved in a signal transduction pathway controlling epididymal function and male fertility. Ligand binding causes a conformation change that triggers signaling via guanine nucleotide-binding proteins (G proteins) and modulates the activity of downstream effectors, such as adenylate cyclase. ADGRG2 is coupled to G(s) G proteins and mediates activation of adenylate cyclase activity. Also able to couple with G(q) G proteins in vitro. May regulate fluid exchange within epididymis. This is Adhesion G-protein coupled receptor G2 from Rattus norvegicus (Rat).